Consider the following 72-residue polypeptide: Sperm protein associated with the nucleus on the X chromosome N1 (72 aa).

The interval 1-40 (MEKPTSSTNGEKRKSPCDSNSKNDEMQETPNRDLVLEPSL) is disordered. The span at 10-35 (GEKRKSPCDSNSKNDEMQETPNRDLV) shows a compositional bias: basic and acidic residues.

The protein belongs to the SPAN-X family.

This is Sperm protein associated with the nucleus on the X chromosome N1 (SPANXN1) from Pan troglodytes (Chimpanzee).